The following is a 565-amino-acid chain: Mitochondrial distribution and morphology protein 34 (565 aa).

One can recognise an SMP-LTD domain in the interval 1–208 (MAFNFNWSPL…VPEYRDRESE (208 aa)). Polar residues predominate over residues 209 to 220 (SVNTLDLSSESG). 3 disordered regions span residues 209 to 241 (SVNTLDLSSESGPGQDPLASPPQDPVDASGNAL), 347 to 463 (FGSY…SRSA), and 533 to 565 (MQEQKIDPSGSRPFPDFWDDHSREEIPPPAYGH). The segment covering 353–367 (PGRHSRSHTKKRKKR) has biased composition (basic residues). Basic and acidic residues predominate over residues 368–378 (VVDLRRPKTTD). Over residues 382 to 391 (SVSGDSVFSS) the composition is skewed to low complexity. 2 stretches are compositionally biased toward polar residues: residues 392–402 (ENATSAPTIFS) and 439–463 (QGDQTLRRSNLSMSEAAQPSSSRSA).

It belongs to the MDM34 family. In terms of assembly, component of the ER-mitochondria encounter structure (ERMES) or MDM complex, composed of mmm1, mdm10, mdm12 and mdm34.

The protein localises to the mitochondrion outer membrane. Its function is as follows. Component of the ERMES/MDM complex, which serves as a molecular tether to connect the endoplasmic reticulum (ER) and mitochondria. Components of this complex are involved in the control of mitochondrial shape and protein biogenesis, and function in nonvesicular lipid trafficking between the ER and mitochondria. Mdm34 is required for the interaction of the ER-resident membrane protein mmm1 and the outer mitochondrial membrane-resident beta-barrel protein mdm10. This is Mitochondrial distribution and morphology protein 34 from Talaromyces marneffei (strain ATCC 18224 / CBS 334.59 / QM 7333) (Penicillium marneffei).